The primary structure comprises 605 residues: ABC transporter E family member 2 (605 aa).

The 30-residue stretch at 46–75 folds into the 4Fe-4S ferredoxin-type domain; that stretch reads KLAFISEELCIGCGICVKKCPFEAIQIINL. ABC transporter domains follow at residues 70 to 315 and 344 to 568; these read IQII…FLAG and IQSY…LSHL. ATP is bound by residues 110-117 and 381-388; these read GTNGIGKS and GENGTGKT.

This sequence belongs to the ABC transporter superfamily. ABCE family. In terms of tissue distribution, expressed in roots, stems, leaves, flowers and siliques.

Its subcellular location is the membrane. This is ABC transporter E family member 2 (ABCE2) from Arabidopsis thaliana (Mouse-ear cress).